The following is a 250-amino-acid chain: Keratin-associated protein 9-1 (250 aa).

32 consecutive repeat copies span residues Cys8–Thr12, Cys13–Thr17, Cys18–Thr22, Cys37–Ser41, Cys42–Ser46, Cys51–Thr55, Cys56–Thr60, Cys61–Thr65, Cys66–Thr70, Cys75–Ser79, Cys80–Pro84, Cys85–Thr89, Cys90–Ser94, Cys95–Thr99, Cys105–Ile109, Cys114–Pro117, Cys118–Pro121, Cys133–Thr137, Cys138–Thr142, Cys143–Thr147, Cys153–Ser157, Cys162–Thr166, Cys167–Ile171, Cys176–Ser180, Cys185–Pro189, Cys190–Thr194, Cys214–Thr218, Cys219–Thr223, Cys229–Ser233, Cys234–Pro238, Cys239–Ser243, and Cys244–Ser248. The segment at Cys8–Ser248 is 32 X 5 AA repeats of C-C-[CGSVRQH]-[SQTNP]-[PTSI].

Belongs to the KRTAP type 9 family. As to quaternary structure, interacts with hair keratins.

Functionally, in the hair cortex, hair keratin intermediate filaments are embedded in an interfilamentous matrix, consisting of hair keratin-associated proteins (KRTAP), which are essential for the formation of a rigid and resistant hair shaft through their extensive disulfide bond cross-linking with abundant cysteine residues of hair keratins. The matrix proteins include the high-sulfur and high-glycine-tyrosine keratins. The protein is Keratin-associated protein 9-1 of Homo sapiens (Human).